Here is a 228-residue protein sequence, read N- to C-terminus: Triosephosphate isomerase (228 aa).

Residue 11 to 13 participates in substrate binding; that stretch reads NFK. The Electrophile role is filled by His-95. Catalysis depends on Glu-143, which acts as the Proton acceptor. Substrate contacts are provided by residues Ile-148, Gly-183, and 204–205; that span reads AS.

It belongs to the triosephosphate isomerase family. Homotetramer; dimer of dimers.

The protein localises to the cytoplasm. It carries out the reaction D-glyceraldehyde 3-phosphate = dihydroxyacetone phosphate. Its pathway is carbohydrate biosynthesis; gluconeogenesis. The protein operates within carbohydrate degradation; glycolysis; D-glyceraldehyde 3-phosphate from glycerone phosphate: step 1/1. Functionally, involved in the gluconeogenesis. Catalyzes stereospecifically the conversion of dihydroxyacetone phosphate (DHAP) to D-glyceraldehyde-3-phosphate (G3P). The polypeptide is Triosephosphate isomerase (Pyrococcus horikoshii (strain ATCC 700860 / DSM 12428 / JCM 9974 / NBRC 100139 / OT-3)).